We begin with the raw amino-acid sequence, 245 residues long: tRNA pseudouridine synthase A 2 (245 aa).

The active-site Nucleophile is Asp53. Residue Tyr111 coordinates substrate.

Belongs to the tRNA pseudouridine synthase TruA family. As to quaternary structure, homodimer.

It carries out the reaction uridine(38/39/40) in tRNA = pseudouridine(38/39/40) in tRNA. In terms of biological role, formation of pseudouridine at positions 38, 39 and 40 in the anticodon stem and loop of transfer RNAs. The sequence is that of tRNA pseudouridine synthase A 2 from Bacillus cereus (strain ZK / E33L).